Consider the following 480-residue polypeptide: Aspartyl/glutamyl-tRNA(Asn/Gln) amidotransferase subunit B (480 aa).

The protein belongs to the GatB/GatE family. GatB subfamily. As to quaternary structure, heterotrimer of A, B and C subunits.

It carries out the reaction L-glutamyl-tRNA(Gln) + L-glutamine + ATP + H2O = L-glutaminyl-tRNA(Gln) + L-glutamate + ADP + phosphate + H(+). It catalyses the reaction L-aspartyl-tRNA(Asn) + L-glutamine + ATP + H2O = L-asparaginyl-tRNA(Asn) + L-glutamate + ADP + phosphate + 2 H(+). Functionally, allows the formation of correctly charged Asn-tRNA(Asn) or Gln-tRNA(Gln) through the transamidation of misacylated Asp-tRNA(Asn) or Glu-tRNA(Gln) in organisms which lack either or both of asparaginyl-tRNA or glutaminyl-tRNA synthetases. The reaction takes place in the presence of glutamine and ATP through an activated phospho-Asp-tRNA(Asn) or phospho-Glu-tRNA(Gln). In Caldicellulosiruptor saccharolyticus (strain ATCC 43494 / DSM 8903 / Tp8T 6331), this protein is Aspartyl/glutamyl-tRNA(Asn/Gln) amidotransferase subunit B.